The following is a 434-amino-acid chain: AT-rich interactive domain-containing protein 5 (434 aa).

Residues 1–120 (MMADTEMQEQ…SSPHVPEESV (120 aa)) form a disordered region. Basic and acidic residues-rich tracts occupy residues 25–37 (ELEK…ERPK), 43–54 (DTTHTLDSDVHL), and 78–90 (RNGD…KKIT). Polar residues predominate over residues 92–102 (DGGQEETTLGE). Residues 142–233 (PQDQEAFIKE…ALLEYEKHLR (92 aa)) enclose the ARID domain. Residues 237–274 (ELNLPGSASLPSSGIEKEASSHQASGSGRTRRDAAARA) are disordered. Residues 336–434 (AEVIDVGPPA…RLFVRVPFEQ (99 aa)) enclose the sHSP domain.

Belongs to the small heat shock protein (HSP20) family.

The protein localises to the nucleus. This is AT-rich interactive domain-containing protein 5 (ARID5) from Arabidopsis thaliana (Mouse-ear cress).